The following is a 206-amino-acid chain: Synaptosomal-associated protein 25 (206 aa).

Residues 1-20 (MAEDADMRNELEEMQRRADQ) are compositionally biased toward basic and acidic residues. A disordered region spans residues 1–25 (MAEDADMRNELEEMQRRADQLADES). Residues 1–75 (MAEDADMRNE…QINKDMKEAE (75 aa)) are interaction with CENPF. Residues 19-81 (DQLADESLES…KEAEKNSTDL (63 aa)) enclose the t-SNARE coiled-coil homology 1 domain. Residues Cys85, Cys88, Cys90, and Cys92 are each lipidated (S-palmitoyl cysteine). Residues 111-120 (GVVASQPARV) form an interaction with ZDHHC17 region. Thr138 carries the post-translational modification Phosphothreonine. Residues 140 to 202 (DARENEMDEN…DEANQRATKM (63 aa)) form the t-SNARE coiled-coil homology 2 domain. Ser154 and Ser187 each carry phosphoserine.

This sequence belongs to the SNAP-25 family. Part of the SNARE core complex containing SNAP25, VAMP2 and STX1A; this complex binds CPLX1. Found in a complex containing SYT1, SV2B and syntaxin-1. Found in a ternary complex with STX1A and VAMP8. Interacts with HSC70 and with SYT9, forming a complex with DNAJC5. The interaction with SYT9 is inhibited in presence of calcium. Isoform 1 and isoform 2 interact with BLOC1S6. Interacts with CENPF. Interacts with EQTN. Interacts with HGS. Interacts with KCNB1 (via N-terminus); reduces the voltage-dependent potassium channel KCNB1 activity in pancreatic beta cells. Interacts with OTOF. Interacts with RIMS1. Interacts with SNAPIN. Interacts with STXBP6. Interacts with TRIM9. Interacts with ZDHHC13 (via ANK repeats). Interacts with ZDHHC17 (via ANK repeats). Associates with the BLOC-1 complex. Interacts with PLCL1 (via C2 domain). Interacts with PRRT2; this interaction may impair the formation of the SNARE complex. Interacts with alpha-synuclein/SNCA. Interacts with PRPH2. Interacts with ROM1. Interacts with STX3. In terms of processing, palmitoylated. Cys-85 appears to be the main site, and palmitoylation is required for membrane association.

The protein localises to the cytoplasm. It is found in the perinuclear region. It localises to the cell membrane. Its subcellular location is the synapse. The protein resides in the synaptosome. The protein localises to the photoreceptor inner segment. In terms of biological role, t-SNARE involved in the molecular regulation of neurotransmitter release. May play an important role in the synaptic function of specific neuronal systems. Associates with proteins involved in vesicle docking and membrane fusion. Regulates plasma membrane recycling through its interaction with CENPF. Modulates the gating characteristics of the delayed rectifier voltage-dependent potassium channel KCNB1 in pancreatic beta cells. This is Synaptosomal-associated protein 25 (SNAP25) from Pongo abelii (Sumatran orangutan).